We begin with the raw amino-acid sequence, 953 residues long: Pyruvate, phosphate dikinase, chloroplastic (953 aa).

The transit peptide at 1–77 (MMSSLSVEGM…VLNPVSPPVT (77 aa)) directs the protein to the chloroplast. Residues 55–74 (PELRSSGLTPPRAVLNPVSP) form a disordered region. Thr-533 carries the phosphothreonine; by PDRP1 modification. His-535 functions as the Tele-phosphohistidine intermediate in the catalytic mechanism. Positions 641, 698, 827, 848, 849, 850, and 851 each coordinate substrate. Glu-827 contacts Mg(2+). A Mg(2+)-binding site is contributed by Asp-851. Cys-913 (proton donor) is an active-site residue.

Belongs to the PEP-utilizing enzyme family. In terms of assembly, homotetramer. Requires Mg(2+) as cofactor. In terms of processing, phosphorylation of Thr-533 in the dark inactivates the enzyme. Dephosphorylation upon light stimulation reactivates the enzyme.

Its subcellular location is the plastid. The protein resides in the chloroplast. The catalysed reaction is pyruvate + phosphate + ATP = phosphoenolpyruvate + AMP + diphosphate + H(+). It functions in the pathway photosynthesis; C4 acid pathway. Activated by light-induced dephosphorylation. Inhibited by dark-induced phosphorylation. Both reactions are catalyzed by PDRP1. Inactivated by cold due to the dissociation of the homotetramer. In terms of biological role, formation of phosphoenolpyruvate, which is the primary acceptor of CO(2) in C4 and some Crassulacean acid metabolism plants. This is Pyruvate, phosphate dikinase, chloroplastic from Flaveria bidentis (Coastal plain yellowtops).